A 215-amino-acid chain; its full sequence is 3-dehydroquinate dehydratase (215 aa).

Residues 30-32 and Arg62 each bind 3-dehydroquinate; that span reads EVR. His114 functions as the Proton donor/acceptor in the catalytic mechanism. Lys140 functions as the Schiff-base intermediate with substrate in the catalytic mechanism. Residues Arg178 and Gln201 each contribute to the 3-dehydroquinate site.

The protein belongs to the type-I 3-dehydroquinase family. As to quaternary structure, homodimer.

It catalyses the reaction 3-dehydroquinate = 3-dehydroshikimate + H2O. Its pathway is metabolic intermediate biosynthesis; chorismate biosynthesis; chorismate from D-erythrose 4-phosphate and phosphoenolpyruvate: step 3/7. Functionally, involved in the third step of the chorismate pathway, which leads to the biosynthesis of aromatic amino acids. Catalyzes the cis-dehydration of 3-dehydroquinate (DHQ) and introduces the first double bond of the aromatic ring to yield 3-dehydroshikimate. The protein is 3-dehydroquinate dehydratase of Methanopyrus kandleri (strain AV19 / DSM 6324 / JCM 9639 / NBRC 100938).